The following is a 496-amino-acid chain: Polyphosphate:AMP phosphotransferase (496 aa).

PPK2 stretches follow at residues 11 to 234 (IDKD…LQAA) and 269 to 495 (LDKD…YKKD).

The protein belongs to the polyphosphate kinase 2 (PPK2) family. Class II subfamily. Homodimer. Requires Mg(2+) as cofactor.

The catalysed reaction is [phosphate](n) + ADP = [phosphate](n+1) + AMP. Uses inorganic polyphosphate (polyP) as a donor to convert AMP to ADP. Can also convert GMP to GDP, with lower efficiency. Cannot dephosphorylate ADP in the presence of polyP. This Pseudomonas aeruginosa (strain ATCC 15692 / DSM 22644 / CIP 104116 / JCM 14847 / LMG 12228 / 1C / PRS 101 / PAO1) protein is Polyphosphate:AMP phosphotransferase.